The primary structure comprises 66 residues: Large ribosomal subunit protein bL35 (66 aa).

This sequence belongs to the bacterial ribosomal protein bL35 family.

The protein is Large ribosomal subunit protein bL35 of Phenylobacterium zucineum (strain HLK1).